A 254-amino-acid chain; its full sequence is Imidazole glycerol phosphate synthase subunit HisF (254 aa).

Catalysis depends on residues D12 and D131.

This sequence belongs to the HisA/HisF family. In terms of assembly, heterodimer of HisH and HisF.

The protein resides in the cytoplasm. The catalysed reaction is 5-[(5-phospho-1-deoxy-D-ribulos-1-ylimino)methylamino]-1-(5-phospho-beta-D-ribosyl)imidazole-4-carboxamide + L-glutamine = D-erythro-1-(imidazol-4-yl)glycerol 3-phosphate + 5-amino-1-(5-phospho-beta-D-ribosyl)imidazole-4-carboxamide + L-glutamate + H(+). It participates in amino-acid biosynthesis; L-histidine biosynthesis; L-histidine from 5-phospho-alpha-D-ribose 1-diphosphate: step 5/9. In terms of biological role, IGPS catalyzes the conversion of PRFAR and glutamine to IGP, AICAR and glutamate. The HisF subunit catalyzes the cyclization activity that produces IGP and AICAR from PRFAR using the ammonia provided by the HisH subunit. This is Imidazole glycerol phosphate synthase subunit HisF from Herminiimonas arsenicoxydans.